Consider the following 318-residue polypeptide: NAC domain-containing protein 68 (318 aa).

Positions 21 to 175 (LPPGFRFHPT…EWVLCRLYNK (155 aa)) constitute an NAC domain.

Expressed in stems, leaf blades and callus. Weakly expressed in developing flowers.

It localises to the nucleus. In terms of biological role, probable transcription factor involved in stress response. In Oryza sativa subsp. japonica (Rice), this protein is NAC domain-containing protein 68.